Here is a 119-residue protein sequence, read N- to C-terminus: Ribonuclease P protein component (119 aa).

It belongs to the RnpA family. In terms of assembly, consists of a catalytic RNA component (M1 or rnpB) and a protein subunit.

It catalyses the reaction Endonucleolytic cleavage of RNA, removing 5'-extranucleotides from tRNA precursor.. RNaseP catalyzes the removal of the 5'-leader sequence from pre-tRNA to produce the mature 5'-terminus. It can also cleave other RNA substrates such as 4.5S RNA. The protein component plays an auxiliary but essential role in vivo by binding to the 5'-leader sequence and broadening the substrate specificity of the ribozyme. This chain is Ribonuclease P protein component, found in Listeria monocytogenes serotype 4b (strain CLIP80459).